The chain runs to 65 residues: Large ribosomal subunit protein bL35 (65 aa).

Residues 1–15 (MPKMKTKKSAAKRFQ) are compositionally biased toward basic residues. Residues 1–26 (MPKMKTKKSAAKRFQVRGSGSIKRGQ) form a disordered region.

Belongs to the bacterial ribosomal protein bL35 family.

The chain is Large ribosomal subunit protein bL35 from Bordetella avium (strain 197N).